Here is a 436-residue protein sequence, read N- to C-terminus: Antilisterial bacteriocin subtilosin biosynthesis protein AlbD (436 aa).

Transmembrane regions (helical) follow at residues 27 to 47 (IAAGLVILAVFEIGLIRQAGI), 55 to 75 (TYIILALLLMNTYMVFLSVTS), 113 to 133 (LFFFILPLFLFGNGTLSGAQT), 134 to 154 (LFWLGRFSFFTVYSIIFGVVL), 164 to 184 (LMFLLHAAIFACVCISAALMP), 187 to 207 (TIPLCAVHILWAVVIDFPVFL), 240 to 260 (AMLLNYAVMAVFSGFFSFQMM), 270 to 290 (IYIVISALLLICSPIALLYSI), 315 to 335 (FYSGLLAGGFLLVVMIVGFIS), and 395 to 415 (AILAGTAVSLAVIPIAGLVIV).

The protein localises to the cell membrane. Its function is as follows. Involved in the production of the bacteriocin subtilosin. Required for immunity to subtilosin. The protein is Antilisterial bacteriocin subtilosin biosynthesis protein AlbD (albD) of Bacillus subtilis (strain 168).